A 71-amino-acid chain; its full sequence is Biotinylated protein TB7.3 homolog (71 aa).

The region spanning 2-71 (AEDVRAEIVA…QAGHLIAVID (70 aa)) is the Biotinyl-binding domain. Position 37 is an N6-biotinyllysine (K37).

The protein is Biotinylated protein TB7.3 homolog of Mycolicibacterium smegmatis (strain ATCC 700084 / mc(2)155) (Mycobacterium smegmatis).